The chain runs to 843 residues: Protein P (843 aa).

The tract at residues 1-177 is terminal protein domain (TP); it reads MPLSYPHFRK…FCGSPYSWEQ (177 aa). Residues 178-346 are spacer; it reads ELQHGSTSIN…YCLSHIINLL (169 aa). 2 disordered regions span residues 180–221 and 282–313; these read QHGS…FQQS and REKTNPSLSTSKRHSSTGHAVELNPVPPGSVR. Over residues 196 to 221 the composition is skewed to polar residues; that stretch reads SLCTQSSGILSRPSAGSSIQGKFQQS. Residues 347–690 are polymerase/reverse transcriptase domain (RT); it reads EDWGPCYEHG…YMHLYPVARQ (344 aa). In terms of domain architecture, Reverse transcriptase spans 357-600; the sequence is QHHIRTPRTP…YTLNFMGYVI (244 aa). Mg(2+) contacts are provided by D429, D551, and D552.

It belongs to the hepadnaviridae P protein family.

It catalyses the reaction DNA(n) + a 2'-deoxyribonucleoside 5'-triphosphate = DNA(n+1) + diphosphate. It carries out the reaction Endonucleolytic cleavage to 5'-phosphomonoester.. With respect to regulation, activated by host HSP70 and HSP40 in vitro to be able to bind the epsilon loop of the pgRNA. Because deletion of the RNase H region renders the protein partly chaperone-independent, the chaperones may be needed indirectly to relieve occlusion of the RNA-binding site by this domain. Inhibited by several reverse-transcriptase inhibitors: Lamivudine, Adefovir and Entecavir. Its function is as follows. Multifunctional enzyme that converts the viral RNA genome into dsDNA in viral cytoplasmic capsids. This enzyme displays a DNA polymerase activity that can copy either DNA or RNA templates, and a ribonuclease H (RNase H) activity that cleaves the RNA strand of RNA-DNA heteroduplexes in a partially processive 3'- to 5'-endonucleasic mode. Neo-synthesized pregenomic RNA (pgRNA) are encapsidated together with the P protein, and reverse-transcribed inside the nucleocapsid. Initiation of reverse-transcription occurs first by binding the epsilon loop on the pgRNA genome, and is initiated by protein priming, thereby the 5'-end of (-)DNA is covalently linked to P protein. Partial (+)DNA is synthesized from the (-)DNA template and generates the relaxed circular DNA (RC-DNA) genome. After budding and infection, the RC-DNA migrates in the nucleus, and is converted into a plasmid-like covalently closed circular DNA (cccDNA). The activity of P protein does not seem to be necessary for cccDNA generation, and is presumably released from (+)DNA by host nuclear DNA repair machinery. The chain is Protein P from Homo sapiens (Human).